The following is a 464-amino-acid chain: tRNA modification GTPase MnmE (464 aa).

3 residues coordinate (6S)-5-formyl-5,6,7,8-tetrahydrofolate: R25, E87, and K130. The TrmE-type G domain occupies 226-386 (GLSVVLAGQP…LRAELLRIAG (161 aa)). A K(+)-binding site is contributed by N236. Residues 236 to 241 (NVGKSS), 255 to 261 (TPIAGTT), and 280 to 283 (DTAG) each bind GTP. S240 provides a ligand contact to Mg(2+). K(+) contacts are provided by T255, I257, and T260. T261 contributes to the Mg(2+) binding site. Residue K464 participates in (6S)-5-formyl-5,6,7,8-tetrahydrofolate binding.

The protein belongs to the TRAFAC class TrmE-Era-EngA-EngB-Septin-like GTPase superfamily. TrmE GTPase family. Homodimer. Heterotetramer of two MnmE and two MnmG subunits. It depends on K(+) as a cofactor.

The protein localises to the cytoplasm. Exhibits a very high intrinsic GTPase hydrolysis rate. Involved in the addition of a carboxymethylaminomethyl (cmnm) group at the wobble position (U34) of certain tRNAs, forming tRNA-cmnm(5)s(2)U34. This chain is tRNA modification GTPase MnmE, found in Burkholderia orbicola (strain MC0-3).